The sequence spans 166 residues: Interferon gamma (166 aa).

The first 23 residues, 1 to 23 (MKYTSYFLALLLCVLLGFSGSYG), serve as a signal peptide directing secretion. A Pyrrolidone carboxylic acid modification is found at Gln24. Asn39 and Asn106 each carry an N-linked (GlcNAc...) asparagine glycan.

It belongs to the type II (or gamma) interferon family. As to quaternary structure, homodimer. Interacts with IFNGR1 (via extracellular domain); this interaction promotes IFNGR1 dimerization. As to expression, released primarily from activated T lymphocytes.

Its subcellular location is the secreted. Its function is as follows. Type II interferon produced by immune cells such as T-cells and NK cells that plays crucial roles in antimicrobial, antiviral, and antitumor responses by activating effector immune cells and enhancing antigen presentation. Primarily signals through the JAK-STAT pathway after interaction with its receptor IFNGR1 to affect gene regulation. Upon IFNG binding, IFNGR1 intracellular domain opens out to allow association of downstream signaling components JAK2, JAK1 and STAT1, leading to STAT1 activation, nuclear translocation and transcription of IFNG-regulated genes. Many of the induced genes are transcription factors such as IRF1 that are able to further drive regulation of a next wave of transcription. Plays a role in class I antigen presentation pathway by inducing a replacement of catalytic proteasome subunits with immunoproteasome subunits. In turn, increases the quantity, quality, and repertoire of peptides for class I MHC loading. Increases the efficiency of peptide generation also by inducing the expression of activator PA28 that associates with the proteasome and alters its proteolytic cleavage preference. Up-regulates as well MHC II complexes on the cell surface by promoting expression of several key molecules such as cathepsins B/CTSB, H/CTSH, and L/CTSL. Participates in the regulation of hematopoietic stem cells during development and under homeostatic conditions by affecting their development, quiescence, and differentiation. In Bubalus carabanensis (Swamp type water buffalo), this protein is Interferon gamma (IFNG).